We begin with the raw amino-acid sequence, 342 residues long: D-erythrose-4-phosphate dehydrogenase (342 aa).

11–12 serves as a coordination point for NAD(+); that stretch reads RV. Substrate contacts are provided by residues 153-155, arginine 199, 212-213, and arginine 235; these read SCT and TK. Catalysis depends on cysteine 154, which acts as the Nucleophile. NAD(+) is bound at residue asparagine 317.

Belongs to the glyceraldehyde-3-phosphate dehydrogenase family. Epd subfamily. In terms of assembly, homotetramer.

It is found in the cytoplasm. It carries out the reaction D-erythrose 4-phosphate + NAD(+) + H2O = 4-phospho-D-erythronate + NADH + 2 H(+). It functions in the pathway cofactor biosynthesis; pyridoxine 5'-phosphate biosynthesis; pyridoxine 5'-phosphate from D-erythrose 4-phosphate: step 1/5. Its function is as follows. Catalyzes the NAD-dependent conversion of D-erythrose 4-phosphate to 4-phosphoerythronate. The protein is D-erythrose-4-phosphate dehydrogenase of Pseudoalteromonas atlantica (strain T6c / ATCC BAA-1087).